Here is a 109-residue protein sequence, read N- to C-terminus: uncharacterized protein (109 aa).

A helical transmembrane segment spans residues 75–95 (MALFHTVFILWPHFCGILWTV).

It localises to the membrane. This is an uncharacterized protein from Saccharomyces cerevisiae (strain ATCC 204508 / S288c) (Baker's yeast).